The primary structure comprises 128 residues: uncharacterized protein (128 aa).

Helical transmembrane passes span 30 to 50 (ILFTILSVAIIMVAFDSLGSS), 65 to 85 (VFRGNTAKGIAVVGIIVLGIQ), and 93 to 113 (WEVALVVVTAIIILFKAPDIV).

The protein resides in the cell membrane. This is an uncharacterized protein from Rickettsia prowazekii (strain Madrid E).